A 314-amino-acid chain; its full sequence is uncharacterized protein (314 aa).

An N-terminal signal peptide occupies residues 1–20; it reads MKKRAGIWAALLLAAVMLAG. A lipid anchor (N-palmitoyl cysteine) is attached at C21. Residue C21 is the site of S-diacylglycerol cysteine attachment. Residues 59–311 form the Fe/B12 periplasmic-binding domain; that stretch reads KIVSLMPSNT…ELAESIYPDT (253 aa).

It belongs to the bacterial solute-binding protein 8 family. In terms of assembly, the complex is composed of two ATP-binding proteins (YvrA), two transmembrane proteins (YvrB) and a solute-binding protein (YvrC).

The protein localises to the cell membrane. Its function is as follows. Probably part of an ABC transporter complex. This is an uncharacterized protein from Bacillus subtilis (strain 168).